Consider the following 384-residue polypeptide: Dual specificity protein phosphatase 5 (384 aa).

The 123-residue stretch at 19–141 (AAARCVVLDC…FYSEYPECCV (123 aa)) folds into the Rhodanese domain. The short motif at 53–74 (RRARGGAVSARYVLPDEAARAR) is the Nuclear localization signal element. In terms of domain architecture, Tyrosine-protein phosphatase spans 178–319 (GPVEILPFLY…LLQYESEILP (142 aa)). The active-site Phosphocysteine intermediate is the Cys263.

This sequence belongs to the protein-tyrosine phosphatase family. Non-receptor class dual specificity subfamily.

It is found in the nucleus. The enzyme catalyses O-phospho-L-tyrosyl-[protein] + H2O = L-tyrosyl-[protein] + phosphate. It catalyses the reaction O-phospho-L-seryl-[protein] + H2O = L-seryl-[protein] + phosphate. It carries out the reaction O-phospho-L-threonyl-[protein] + H2O = L-threonyl-[protein] + phosphate. Functionally, dual specificity protein phosphatase; active with phosphotyrosine, phosphoserine and phosphothreonine residues. The highest relative activity is toward ERK1. This is Dual specificity protein phosphatase 5 (DUSP5) from Homo sapiens (Human).